We begin with the raw amino-acid sequence, 232 residues long: MAHQGKRVRAANEGIDRLKLYPLDEALALLKARTTAKFDETIEVAINLGVDPRHADQMVRGVCNLPNGSGRTVRVAVFARGAKADEAKAAGADIVGAEDLLETIQGGTIEFDRCIATPDLMPLVGRLGKVLGPRGLMPNPKVGTVTMDVKGAVAAAKGGAVEFRVEKAGIIHGGIGKASFPADKLAENIRAFVDAVVKAKPTGAKGTYVQRVAVSSTMGPGIKVDTASVVTA.

Belongs to the universal ribosomal protein uL1 family. In terms of assembly, part of the 50S ribosomal subunit.

Functionally, binds directly to 23S rRNA. The L1 stalk is quite mobile in the ribosome, and is involved in E site tRNA release. In terms of biological role, protein L1 is also a translational repressor protein, it controls the translation of the L11 operon by binding to its mRNA. The protein is Large ribosomal subunit protein uL1 of Azorhizobium caulinodans (strain ATCC 43989 / DSM 5975 / JCM 20966 / LMG 6465 / NBRC 14845 / NCIMB 13405 / ORS 571).